Consider the following 83-residue polypeptide: Small ribosomal subunit protein bS16 (83 aa).

This sequence belongs to the bacterial ribosomal protein bS16 family.

The sequence is that of Small ribosomal subunit protein bS16 from Acinetobacter baumannii (strain AB307-0294).